We begin with the raw amino-acid sequence, 132 residues long: MAEEGIAAGGVMDVNTALQEVLKTALIHDGLARGIREAAKALDKRQAHLCVLASNCDEPMYVKLVEALCAEHQINLIKVDDNKKLGEWVGLCKIDREGKPRKVVGCSCVVVKDYGKESQAKDVIEEYFKCKK.

Alanine 2 is subject to N-acetylalanine. Lysine 129 carries the post-translational modification N6-succinyllysine.

This sequence belongs to the eukaryotic ribosomal protein eS12 family. In terms of assembly, part of the small subunit (SSU) processome, composed of more than 70 proteins and the RNA chaperone small nucleolar RNA (snoRNA) U3. Subunit of the 40S ribosomal complex.

It is found in the nucleus. It localises to the nucleolus. Part of the small subunit (SSU) processome, first precursor of the small eukaryotic ribosomal subunit. During the assembly of the SSU processome in the nucleolus, many ribosome biogenesis factors, an RNA chaperone and ribosomal proteins associate with the nascent pre-rRNA and work in concert to generate RNA folding, modifications, rearrangements and cleavage as well as targeted degradation of pre-ribosomal RNA by the RNA exosome. Subunit of the 40S ribosomal complex. The polypeptide is Small ribosomal subunit protein eS12 (Rps12) (Mus musculus (Mouse)).